A 350-amino-acid chain; its full sequence is MAFKLASSPHLKVQLQTQSVMRRVTLCALPGVAAQFYFFGWGVLVQVMLAITIALLSEAAVLKLRKRPIISTLSDNSAVLTALLIGVSIPSIAPWWVVVVGTIFAIVIVKHLYGGLGQNIFNPAMAAYVMLLISFPVQMTSWSVPLSLAQTPMDLSLTLNAIFGAMTPEKLSIYKYGIDGIAMATPLDTVKTDLSLGLTITESLSKTIFSDGFGVGWFWVNVAYLVGGLAMLKLKVIRWQISVGILAALFVCSSFGYLLSPDTHIGPLFQLFSGATMLAVFFIATDPVTAATSVRGRLLFGGLIGVLVYVIRTYGGYPDAFAFAILLANLCAPFIDYYIKPRSYGHRAGS.

The next 4 membrane-spanning stretches (helical) occupy residues 36 to 56 (FYFF…IALL), 68 to 88 (PIIS…IGVS), 89 to 109 (IPSI…IVIV), and 120 to 140 (IFNP…VQMT). The residue at position 185 (Thr-185) is an FMN phosphoryl threonine. Helical transmembrane passes span 212-232 (GFGV…LAML), 239-259 (WQIS…GYLL), 265-285 (IGPL…FIAT), 291-311 (ATSV…VYVI), and 315-335 (GGYP…APFI).

This sequence belongs to the NqrB/RnfD family. The complex is composed of six subunits: RnfA, RnfB, RnfC, RnfD, RnfE and RnfG. The cofactor is FMN.

The protein localises to the cell inner membrane. Functionally, part of a membrane-bound complex that couples electron transfer with translocation of ions across the membrane. This chain is Ion-translocating oxidoreductase complex subunit D, found in Shewanella piezotolerans (strain WP3 / JCM 13877).